The following is a 1262-amino-acid chain: Isoleucine--tRNA ligase, cytoplasmic (1262 aa).

Met1 carries the N-acetylmethionine modification. The 'HIGH' region signature appears at Pro48–His58. Residues Lys600–Arg604 carry the 'KMSKS' region motif. Lys603 contacts ATP. A phosphoserine mark is found at Ser1047 and Ser1049. Thr1058 is modified (phosphothreonine).

The protein belongs to the class-I aminoacyl-tRNA synthetase family. In terms of assembly, part of a multisubunit complex that groups tRNA ligases for Arg (RARS1), Asp (DARS1), Gln (QARS1), Ile (IARS1), Leu (LARS1), Lys (KARS1), Met (MARS1) the bifunctional ligase for Glu and Pro (EPRS1) and the auxiliary subunits AIMP1/p43, AIMP2/p38 and EEF1E1/p18. In terms of tissue distribution, expressed in liver and muscle (at protein level).

It localises to the cytoplasm. Its subcellular location is the cytosol. The catalysed reaction is tRNA(Ile) + L-isoleucine + ATP = L-isoleucyl-tRNA(Ile) + AMP + diphosphate. In terms of biological role, catalyzes the specific attachment of an amino acid to its cognate tRNA in a 2 step reaction: the amino acid (AA) is first activated by ATP to form AA-AMP and then transferred to the acceptor end of the tRNA. This Homo sapiens (Human) protein is Isoleucine--tRNA ligase, cytoplasmic.